Consider the following 214-residue polypeptide: Large ribosomal subunit protein uL3 (214 aa).

Residues 119 to 159 are disordered; it reads GVKRHGFAGGPKTHGQSDRHRAPGSIGPTTDPGRVHKGKRM.

This sequence belongs to the universal ribosomal protein uL3 family. In terms of assembly, part of the 50S ribosomal subunit. Forms a cluster with proteins L14 and L19.

In terms of biological role, one of the primary rRNA binding proteins, it binds directly near the 3'-end of the 23S rRNA, where it nucleates assembly of the 50S subunit. The polypeptide is Large ribosomal subunit protein uL3 (Thermomicrobium roseum (strain ATCC 27502 / DSM 5159 / P-2)).